A 340-amino-acid chain; its full sequence is ATP-dependent 6-phosphofructokinase (340 aa).

Residue Gly-11 coordinates ATP. ADP is bound at residue 21 to 25 (RAVVR). Residues 72–73 (RY) and 102–105 (GDGS) each bind ATP. Mg(2+) is bound at residue Asp-103. 125–127 (TID) is a substrate binding site. Asp-127 acts as the Proton acceptor in catalysis. Arg-154 provides a ligand contact to ADP. Substrate is bound by residues Arg-162 and 169-171 (MGR). ADP is bound by residues 185-187 (GAD), Lys-211, and 213-215 (KNH). Residues Glu-222, Arg-244, and 250-253 (HIQR) each bind substrate.

It belongs to the phosphofructokinase type A (PFKA) family. ATP-dependent PFK group I subfamily. Prokaryotic clade 'B1' sub-subfamily. In terms of assembly, homotetramer. Mg(2+) is required as a cofactor.

It is found in the cytoplasm. It catalyses the reaction beta-D-fructose 6-phosphate + ATP = beta-D-fructose 1,6-bisphosphate + ADP + H(+). Its pathway is carbohydrate degradation; glycolysis; D-glyceraldehyde 3-phosphate and glycerone phosphate from D-glucose: step 3/4. Allosterically activated by ADP and other diphosphonucleosides, and allosterically inhibited by phosphoenolpyruvate. Catalyzes the phosphorylation of D-fructose 6-phosphate to fructose 1,6-bisphosphate by ATP, the first committing step of glycolysis. The polypeptide is ATP-dependent 6-phosphofructokinase (Lactococcus lactis subsp. lactis (Streptococcus lactis)).